Reading from the N-terminus, the 226-residue chain is Lysosomal-associated transmembrane protein 4B (226 aa).

Helical transmembrane passes span 26–46 (ILLGVWYLIINAVVLLILLSA), 72–92 (MCIAIAISLLMILICAMATYG), 100–120 (WIIPFFCYQIFDFALNTLVAI), and 153–173 (CLVLIILLFISIILTFKGYLI). The tract at residues 205 to 221 (PPYDDATVNGAAKEPPP) is required for NEDD4 interaction.

Belongs to the LAPTM4/LAPTM5 transporter family. Homooligomer; upon reaching the lysosomes. Interacts with MCOLN1. Interacts with NEDD4; may play a role in the lysosomal sorting of LAPTM4B; enhances HGS association with NEDD4; mediates inhibition of EGFR degradation. Interacts with PIP5K1C; promotes SNX5 association with LAPTM4B; kinase activity of PIP5K1C is required; interaction is regulated by phosphatidylinositol 4,5-bisphosphate generated by PIP5K1C. Interacts with HGS; promotes HGS ubiquitination. Interacts with SNX5. Interacts with SLC3A2 and SLC7A5; recruits SLC3A2 and SLC7A5 to lysosomes to promote leucine uptake into these organelles and is required for mTORC1 activation. Interacts with LRRC32; decreases TGFB1 production in regulatory T cells. Interacts with BECN1; competes with EGFR for LAPTM4B binding; regulates EGFR activity. Interacts with EGFR; positively correlates with EGFR activation. In terms of processing, undergoes proteolytic cleavage following delivery to the lysosomes. Ubiquitinated by NEDD4.

It localises to the endomembrane system. The protein resides in the late endosome membrane. Its subcellular location is the cell membrane. It is found in the cell projection. The protein localises to the lysosome membrane. It localises to the endosome membrane. The protein resides in the endosome. Its subcellular location is the multivesicular body membrane. It is found in the multivesicular body lumen. Functionally, required for optimal lysosomal function. Blocks EGF-stimulated EGFR intraluminal sorting and degradation. Conversely by binding with the phosphatidylinositol 4,5-bisphosphate, regulates its PIP5K1C interaction, inhibits HGS ubiquitination and relieves LAPTM4B inhibition of EGFR degradation. Recruits SLC3A2 and SLC7A5 (the Leu transporter) to the lysosome, promoting entry of leucine and other essential amino acid (EAA) into the lysosome, stimulating activation of proton-transporting vacuolar (V)-ATPase protein pump (V-ATPase) and hence mTORC1 activation. Plays a role as negative regulator of TGFB1 production in regulatory T cells. Binds ceramide and facilitates its exit from late endosome in order to control cell death pathways. The chain is Lysosomal-associated transmembrane protein 4B from Macaca fascicularis (Crab-eating macaque).